Here is a 420-residue protein sequence, read N- to C-terminus: L-rhamnose isomerase (420 aa).

Histidine 264, aspartate 296, and aspartate 298 together coordinate Mn(2+).

This sequence belongs to the rhamnose isomerase family. It depends on Mn(2+) as a cofactor.

Its subcellular location is the cytoplasm. It catalyses the reaction L-rhamnopyranose = L-rhamnulose. It participates in carbohydrate degradation; L-rhamnose degradation; glycerone phosphate from L-rhamnose: step 1/3. Functionally, catalyzes the interconversion of L-rhamnose and L-rhamnulose. The polypeptide is L-rhamnose isomerase (Listeria innocua serovar 6a (strain ATCC BAA-680 / CLIP 11262)).